Here is a 320-residue protein sequence, read N- to C-terminus: Acetyl-coenzyme A carboxylase carboxyl transferase subunit alpha (320 aa).

The CoA carboxyltransferase C-terminal domain maps to 42–295; sequence IGDKAAQALK…GDAIAEAFND (254 aa).

This sequence belongs to the AccA family. As to quaternary structure, acetyl-CoA carboxylase is a heterohexamer composed of biotin carboxyl carrier protein (AccB), biotin carboxylase (AccC) and two subunits each of ACCase subunit alpha (AccA) and ACCase subunit beta (AccD).

The protein resides in the cytoplasm. The catalysed reaction is N(6)-carboxybiotinyl-L-lysyl-[protein] + acetyl-CoA = N(6)-biotinyl-L-lysyl-[protein] + malonyl-CoA. It participates in lipid metabolism; malonyl-CoA biosynthesis; malonyl-CoA from acetyl-CoA: step 1/1. Functionally, component of the acetyl coenzyme A carboxylase (ACC) complex. First, biotin carboxylase catalyzes the carboxylation of biotin on its carrier protein (BCCP) and then the CO(2) group is transferred by the carboxyltransferase to acetyl-CoA to form malonyl-CoA. This is Acetyl-coenzyme A carboxylase carboxyl transferase subunit alpha from Nitrobacter hamburgensis (strain DSM 10229 / NCIMB 13809 / X14).